A 709-amino-acid polypeptide reads, in one-letter code: Bud site selection protein 14 (709 aa).

Ser-2 is modified (N-acetylserine). The interval 61-258 is disordered; the sequence is DIINNRPTSG…DYQPLSPPRE (198 aa). Composition is skewed to polar residues over residues 62-74 and 89-107; these read IINN…SKLT and VTPT…NILS. Composition is skewed to basic and acidic residues over residues 111-123 and 131-150; these read EKGH…RDDD and VEKH…KENS. Tyr-159 carries the post-translational modification Phosphotyrosine. 2 positions are modified to phosphoserine: Ser-160 and Ser-162. At Thr-177 the chain carries Phosphothreonine. Ser-212 and Ser-222 each carry phosphoserine. Residues 212–226 show a composition bias toward acidic residues; it reads SEDEDEEENYSDDDD. An SH3 domain is found at 259-320; that stretch reads LDPDKLYALY…PAEILETFPE (62 aa). Residues 334–367 form a disordered region; that stretch reads SSQSVASSDSKDDSISSGNKNQSDAESIIPTPAL. Phosphoserine is present on residues Ser-376, Ser-378, and Ser-401. Residues 396 to 406 are compositionally biased toward acidic residues; it reads DTSLDSNDDGG. 4 disordered regions span residues 396 to 421, 464 to 510, 525 to 571, and 600 to 680; these read DTSL…DNDK, NVKK…SDYD, ANGM…SSRA, and ASLG…PASK. Positions 470-504 are enriched in basic and acidic residues; it reads RQDNKNESEPKTSSSKDREDDYNANRYVGQEKSEP. Residue Ser-507 is modified to Phosphoserine. Residues 531–552 are compositionally biased toward polar residues; the sequence is SDSQNSLSTIGEFSPSSSEWTN. The segment covering 553 to 569 has biased composition (low complexity); that stretch reads ESPSTPIVEESSSIPSS. Polar residues predominate over residues 600–614; it reads ASLGSSGGMANQTDA. Basic and acidic residues predominate over residues 615 to 633; it reads EQPKEELEKHHSTPEEEKQ. Residues Ser-655, Ser-658, and Ser-670 each carry the phosphoserine modification. Residues 655–671 are compositionally biased toward low complexity; that stretch reads SSASINSSLSGSRALSN.

As to quaternary structure, interacts with GLC7.

Important for bud site selection. Seems to be a regulatory subunit of the BUD14-GLC7 type-I phosphatase complex. The BUD14-GLC7 complex is necessary to regulate microtubule dynamics at the cortex and may function as a specific activator of the dynein complex. The sequence is that of Bud site selection protein 14 (BUD14) from Saccharomyces cerevisiae (strain ATCC 204508 / S288c) (Baker's yeast).